Here is a 668-residue protein sequence, read N- to C-terminus: COBRA-like protein 11 (668 aa).

The signal sequence occupies residues 1-29 (MKKLRYVHLNLLLLLLPLINLQFPTLSLA). N-linked (GlcNAc...) asparagine glycosylation is found at Asn69, Asn125, Asn254, Asn318, Asn329, Asn358, Asn412, Asn432, Asn473, Asn552, Asn560, and Asn579. Ser636 carries the GPI-anchor amidated serine lipid modification. The propeptide at 637-668 (SGMRLSGIRFLPSILLAITTFHAITDRLLTGV) is removed in mature form.

It belongs to the COBRA family. As to expression, mostly expressed in flowers, stamen, anthers and pollen, and, to a lower extent, possibly in roots, stems, leaves and siliques.

Its subcellular location is the cell membrane. In terms of biological role, involved in the deposition of apical pectin cap and cellulose microfibrils in pollen tubes. Implicated in pollen tubes growth in the female transmitting tract of pistil and toward micropyles, via the perception of ovule guidance cues. The protein is COBRA-like protein 11 of Arabidopsis thaliana (Mouse-ear cress).